Reading from the N-terminus, the 367-residue chain is tRNA-specific 2-thiouridylase MnmA (367 aa).

Residues G12 to S19 and M38 each bind ATP. Positions N98–D100 are interaction with target base in tRNA. C103 functions as the Nucleophile in the catalytic mechanism. C103 and C200 are oxidised to a cystine. Residue G128 participates in ATP binding. The segment at K150–Q152 is interaction with tRNA. Residue C200 is the Cysteine persulfide intermediate of the active site. Residues R312–Y313 form an interaction with tRNA region.

It belongs to the MnmA/TRMU family. Interacts with TusE.

It is found in the cytoplasm. It carries out the reaction S-sulfanyl-L-cysteinyl-[protein] + uridine(34) in tRNA + AH2 + ATP = 2-thiouridine(34) in tRNA + L-cysteinyl-[protein] + A + AMP + diphosphate + H(+). Functionally, catalyzes the 2-thiolation of uridine at the wobble position (U34) of tRNA(Lys), tRNA(Glu) and tRNA(Gln), leading to the formation of s(2)U34, the first step of tRNA-mnm(5)s(2)U34 synthesis. Sulfur is provided by IscS, via a sulfur-relay system. Binds ATP and its substrate tRNAs. The sequence is that of tRNA-specific 2-thiouridylase MnmA from Serratia proteamaculans (strain 568).